A 204-amino-acid chain; its full sequence is uncharacterized protein (204 aa).

The interval 118-169 (FPAASERPMPSRRLSKATQNVQTRPSERPAPCHRRPGPRGPGGRDPPEACHP) is disordered.

This is an uncharacterized protein from Encephalitozoon cuniculi (strain GB-M1) (Microsporidian parasite).